Consider the following 580-residue polypeptide: Proline--tRNA ligase (580 aa).

Belongs to the class-II aminoacyl-tRNA synthetase family. ProS type 1 subfamily. Homodimer.

It is found in the cytoplasm. The catalysed reaction is tRNA(Pro) + L-proline + ATP = L-prolyl-tRNA(Pro) + AMP + diphosphate. Its function is as follows. Catalyzes the attachment of proline to tRNA(Pro) in a two-step reaction: proline is first activated by ATP to form Pro-AMP and then transferred to the acceptor end of tRNA(Pro). As ProRS can inadvertently accommodate and process non-cognate amino acids such as alanine and cysteine, to avoid such errors it has two additional distinct editing activities against alanine. One activity is designated as 'pretransfer' editing and involves the tRNA(Pro)-independent hydrolysis of activated Ala-AMP. The other activity is designated 'posttransfer' editing and involves deacylation of mischarged Ala-tRNA(Pro). The misacylated Cys-tRNA(Pro) is not edited by ProRS. In Albidiferax ferrireducens (strain ATCC BAA-621 / DSM 15236 / T118) (Rhodoferax ferrireducens), this protein is Proline--tRNA ligase.